A 246-amino-acid chain; its full sequence is tRNA (guanine-N(1)-)-methyltransferase (246 aa).

S-adenosyl-L-methionine contacts are provided by residues Gly114 and 133–138; that span reads LGDYVL.

This sequence belongs to the RNA methyltransferase TrmD family. In terms of assembly, homodimer.

It is found in the cytoplasm. It catalyses the reaction guanosine(37) in tRNA + S-adenosyl-L-methionine = N(1)-methylguanosine(37) in tRNA + S-adenosyl-L-homocysteine + H(+). In terms of biological role, specifically methylates guanosine-37 in various tRNAs. The polypeptide is tRNA (guanine-N(1)-)-methyltransferase (Enterococcus faecalis (strain ATCC 700802 / V583)).